Here is a 93-residue protein sequence, read N- to C-terminus: Early E3A 10.5 kDa glycoprotein (93 aa).

Asparagine 3 is a glycosylation site (N-linked (GlcNAc...) asparagine; by host). Residues 34 to 55 (MWWFSIALMFVCLIIMWLICCL) form a helical membrane-spanning segment.

Belongs to the adenoviridae E3A-1 family. N-glycosylated and probably also O-glycosylated.

The protein localises to the host nucleus membrane. The chain is Early E3A 10.5 kDa glycoprotein from Homo sapiens (Human).